A 369-amino-acid polypeptide reads, in one-letter code: Cobalt-precorrin-5B C(1)-methyltransferase (369 aa).

The protein belongs to the CbiD family.

The enzyme catalyses Co-precorrin-5B + S-adenosyl-L-methionine = Co-precorrin-6A + S-adenosyl-L-homocysteine. Its pathway is cofactor biosynthesis; adenosylcobalamin biosynthesis; cob(II)yrinate a,c-diamide from sirohydrochlorin (anaerobic route): step 6/10. Catalyzes the methylation of C-1 in cobalt-precorrin-5B to form cobalt-precorrin-6A. The sequence is that of Cobalt-precorrin-5B C(1)-methyltransferase from Geobacter metallireducens (strain ATCC 53774 / DSM 7210 / GS-15).